The primary structure comprises 372 residues: NAD(P)H-quinone oxidoreductase subunit 1 (372 aa).

8 helical membrane passes run 27 to 47, 97 to 117, 128 to 148, 176 to 196, 204 to 224, 266 to 286, 308 to 328, and 347 to 367; these read IIWL…GVLV, ILFT…WLIV, VGIG…GLLM, LALS…IDIV, ILSW…ICAL, ILSA…PVPV, SIGI…AILL, and FLLP…LAFP.

It belongs to the complex I subunit 1 family. NDH-1 is composed of at least 11 different subunits.

Its subcellular location is the cellular thylakoid membrane. It carries out the reaction a plastoquinone + NADH + (n+1) H(+)(in) = a plastoquinol + NAD(+) + n H(+)(out). The catalysed reaction is a plastoquinone + NADPH + (n+1) H(+)(in) = a plastoquinol + NADP(+) + n H(+)(out). In terms of biological role, NDH-1 shuttles electrons from an unknown electron donor, via FMN and iron-sulfur (Fe-S) centers, to quinones in the respiratory and/or the photosynthetic chain. The immediate electron acceptor for the enzyme in this species is believed to be plastoquinone. Couples the redox reaction to proton translocation, and thus conserves the redox energy in a proton gradient. The polypeptide is NAD(P)H-quinone oxidoreductase subunit 1 (Prochlorococcus marinus (strain AS9601)).